Consider the following 516-residue polypeptide: mRNA export factor ICP27 homolog (516 aa).

Residues Cys231, His336, Cys338, and Cys343 each contribute to the Zn(2+) site. The CHC2-type zinc finger occupies 231-343; that stretch reads CVFNDNGHGD…SNHKCDDVSC (113 aa). The segment covering 399 to 409 has biased composition (polar residues); that stretch reads YSTSRDLPQTS. The disordered stretch occupies residues 399 to 423; sequence YSTSRDLPQTSHRSHKNQGTPKVKS.

It belongs to the HHV-1 ICP27 protein family.

It is found in the virion tegument. Its subcellular location is the virion. It localises to the host nucleus. The protein localises to the host cytoplasm. Its function is as follows. Immediate early (EI) protein that plays many roles during productive infection including regulation of viral gene expression and nuclear export of intronless viral RNAs. The sequence is that of mRNA export factor ICP27 homolog from Homo sapiens (Human).